Reading from the N-terminus, the 440-residue chain is Gap junction alpha-8 protein (440 aa).

Residues 2–12 (GDWSFLGNILE) lie within the membrane without spanning it. The Cytoplasmic segment spans residues 13-21 (EVNEHSTVI). A helical transmembrane segment spans residues 22–42 (GRVWLTVLFIFRILILGTAAE). Topologically, residues 43–71 (FVWGDEQSDFVCNTQQPGCENVCYDEAFP) are extracellular. 3 disulfide bridges follow: Cys54-Cys201, Cys61-Cys195, and Cys65-Cys190. The helical transmembrane segment at 72-92 (ISHIRLWVLQIIFVSTPSLVY) threads the bilayer. Residues 93–161 (VGHAVHHVRM…GTLLRTYVCH (69 aa)) are Cytoplasmic-facing. Residues 108-144 (EREAEELSQQSPGNGGERAPLAADQGSVKKSSSSSKG) form a disordered region. The helical transmembrane segment at 162–182 (IIFKTLFEVGFIVGHYFLYGF) threads the bilayer. Over 183–210 (RILPLYRCSRWPCPNVVDCFVSRPTEKT) the chain is Extracellular. Residues 211 to 231 (IFILFMLSVASVSLFLNILEM) traverse the membrane as a helical segment. Residues 232 to 440 (SHLGLKKIRS…SRARSDDLTV (209 aa)) lie on the Cytoplasmic side of the membrane. The disordered stretch occupies residues 334-440 (GAQEGVEEEQ…SRARSDDLTV (107 aa)). Composition is skewed to basic and acidic residues over residues 353–365 (VGDK…RVST) and 375–405 (EEEK…ELTP). The span at 423-432 (LSRLSKASSR) shows a compositional bias: low complexity.

The protein belongs to the connexin family. Alpha-type (group II) subfamily. In terms of assembly, a hemichannel or connexon is composed of a hexamer of connexins. A functional gap junction is formed by the apposition of two hemichannels. Forms heteromeric channels with GJA3. As to expression, detected in eye lens (at protein level). Eye lens.

The protein resides in the cell membrane. It is found in the cell junction. It localises to the gap junction. Functionally, structural component of eye lens gap junctions. Gap junctions are dodecameric channels that connect the cytoplasm of adjoining cells. They are formed by the docking of two hexameric hemichannels, one from each cell membrane. Small molecules and ions diffuse from one cell to a neighboring cell via the central pore. This chain is Gap junction alpha-8 protein (GJA8), found in Ovis aries (Sheep).